Here is a 1078-residue protein sequence, read N- to C-terminus: MARQPLVSSVLVIGSGPIVIGQAAEFDYSGSQALRALREEGIRTIIVNSNPATIMTDEDMADAVYIEPLTVEVLERIIARERPEGLLATLGGQTGLNLAVALAEAGVLDRYGVRLLGTPLEAIRRAEDRQLFKELLLEIGEPVLESLTAYSVEDALRFAEEVPPPLIVRPAFTLGGTGGGIAFSEDELVTLVQRGIAASPIGQVLVERSLLGWKEIEYEVMRDANDTCITICNIENLDPMGVHTGDSIVVAPSQTLSDRDYQMLRSAALKIIRALGIVGGCNIQFALDPRSDQYYVIEVNPRVSRSSALASKATGYPIARIAAKLAIGRTLDEIPNPVTGKTMASFEPALDYCVVKIPRWPFDKFRHGDRRLGSQMKATGEVMAIDRCFEAALQKAVRGLETDQTDLTWEDSRWQDPSALEQALRIPTDQRLWAVAAALRRGWTPEHVSALSGIDTWFVRAIQRLVEMEQRLASEPLTAELLWEAKRLGFADRTIAALRTTTEQEIRAQRLALGLAPVYKLVDTCAAEFAAETPYFYATYEDENEAPPLDSPKAVVIGAGPIRIGQGIEFDYCSVKAAQALHRAGVAAIMLNNNPETVSTDFDASDRLYVTPLDAESVLDVLRHEASSQYDQLPPVIVQFGGQTAINLAADLAAAGVPILGTDQDAIDLAEDRRRFERFLHELGIPQPPGAGVTTLEEALETAERIGYPVLVRPSYVLGGRAMEVVYRREHLEQYLATSGAFASGRPVLIDKYLDGIELEVDALCDGHEVLVPGIMQHIERAGVHSGDSFAVYPAVELPSVHVDTLVRYTTEIALALAARGLINIQFVLHQGVVYVLEVNPRASRTVPFLSKVTGVPMVDVATQILLGRSLGDQGYRGGLWPRQPLVAVKAPVFSMAKLQGVDVQLGPEMKSTGEAMGIDRTFEAALAKAFLAAGLAIERGAPVLLSLADNDKSAGVELARGLLALGHPLVATEGTARYLRAHGVPVELTVAHIGHGHPDVLEVILERKVRGVINTPGRDEGTIQDGFLIRRAAVERGIPCLTSLDTARALVRALLGGGTSFSVQPLPAYRTREAVLA.

The carboxyphosphate synthetic domain stretch occupies residues 1 to 401 (MARQPLVSSV…ALQKAVRGLE (401 aa)). Residues arginine 129, arginine 169, glycine 175, glycine 176, arginine 208, leucine 210, glutamate 215, glycine 241, valine 242, histidine 243, glutamine 284, and glutamate 298 each coordinate ATP. An ATP-grasp 1 domain is found at 133-327 (KELLLEIGEP…IARIAAKLAI (195 aa)). The Mg(2+) site is built by glutamine 284, glutamate 298, and asparagine 300. Mn(2+) contacts are provided by glutamine 284, glutamate 298, and asparagine 300. The segment at 402–546 (TDQTDLTWED…YATYEDENEA (145 aa)) is oligomerization domain. The interval 547–935 (PPLDSPKAVV…ALAKAFLAAG (389 aa)) is carbamoyl phosphate synthetic domain. Residues 677–867 (ERFLHELGIP…MVDVATQILL (191 aa)) enclose the ATP-grasp 2 domain. ATP-binding residues include arginine 713, lysine 752, leucine 754, glutamate 758, glycine 783, valine 784, histidine 785, serine 786, glutamine 826, and glutamate 838. The Mg(2+) site is built by glutamine 826, glutamate 838, and asparagine 840. Glutamine 826, glutamate 838, and asparagine 840 together coordinate Mn(2+). Residues 936–1078 (LAIERGAPVL…AYRTREAVLA (143 aa)) enclose the MGS-like domain. The tract at residues 936–1078 (LAIERGAPVL…AYRTREAVLA (143 aa)) is allosteric domain.

It belongs to the CarB family. Composed of two chains; the small (or glutamine) chain promotes the hydrolysis of glutamine to ammonia, which is used by the large (or ammonia) chain to synthesize carbamoyl phosphate. Tetramer of heterodimers (alpha,beta)4. Mg(2+) is required as a cofactor. Requires Mn(2+) as cofactor.

It catalyses the reaction hydrogencarbonate + L-glutamine + 2 ATP + H2O = carbamoyl phosphate + L-glutamate + 2 ADP + phosphate + 2 H(+). The catalysed reaction is hydrogencarbonate + NH4(+) + 2 ATP = carbamoyl phosphate + 2 ADP + phosphate + 2 H(+). Its pathway is amino-acid biosynthesis; L-arginine biosynthesis; carbamoyl phosphate from bicarbonate: step 1/1. The protein operates within pyrimidine metabolism; UMP biosynthesis via de novo pathway; (S)-dihydroorotate from bicarbonate: step 1/3. Large subunit of the glutamine-dependent carbamoyl phosphate synthetase (CPSase). CPSase catalyzes the formation of carbamoyl phosphate from the ammonia moiety of glutamine, carbonate, and phosphate donated by ATP, constituting the first step of 2 biosynthetic pathways, one leading to arginine and/or urea and the other to pyrimidine nucleotides. The large subunit (synthetase) binds the substrates ammonia (free or transferred from glutamine from the small subunit), hydrogencarbonate and ATP and carries out an ATP-coupled ligase reaction, activating hydrogencarbonate by forming carboxy phosphate which reacts with ammonia to form carbamoyl phosphate. This chain is Carbamoyl phosphate synthase large chain, found in Thermomicrobium roseum (strain ATCC 27502 / DSM 5159 / P-2).